Consider the following 1470-residue polypeptide: Membrane-associated guanylate kinase, WW and PDZ domain-containing protein 3 (1470 aa).

In terms of domain architecture, PDZ 1 spans 18-108 (CAVSWAGPPG…PIRLKTVKPG (91 aa)). Residues 18 to 108 (CAVSWAGPPG…PIRLKTVKPG (91 aa)) form an interaction with ADRB1 and TGFA region. The 175-residue stretch at 116–290 (RHYLSLQFQK…RSMDFRNYMM (175 aa)) folds into the Guanylate kinase-like domain. 123-130 (FQKGSIDH) contacts ATP. Residues 184–266 (TYDGNFYGTP…ETREMHSESS (83 aa)) form a disordered region. Residues 193–204 (PKPPAEPSPFQP) are compositionally biased toward pro residues. Position 236 is a phosphoserine (serine 236). The segment covering 238–247 (LPEEEEDEDK) has biased composition (acidic residues). WW domains lie at 296-329 (EPLP…DPRL) and 342-375 (GELP…NPVE). In terms of domain architecture, PDZ 2 spans 413–495 (RASLKKSTMG…NQYVNLTLCR (83 aa)). An interaction with PTEN region spans residues 413 to 495 (RASLKKSTMG…NQYVNLTLCR (83 aa)). Residues 550–575 (LLSSDRLNGPSDSNEQRASLASSGSS) are disordered. Polar residues predominate over residues 559–575 (PSDSNEQRASLASSGSS). In terms of domain architecture, PDZ 3 spans 581–657 (TIPLVKGPKG…GADVPLLILR (77 aa)). Serine 598 bears the Phosphoserine mark. The disordered stretch occupies residues 665 to 700 (KTAKMKTDTKETSGSLETINEPTPQPMPFPPSIIRS). Over residues 676–686 (TSGSLETINEP) the composition is skewed to polar residues. The residue at position 702 (serine 702) is a Phosphoserine. The region spanning 729-811 (DVFLRKQESG…NGHVLLTVRR (83 aa)) is the PDZ 4 domain. The interval 729–811 (DVFLRKQESG…NGHVLLTVRR (83 aa)) is interaction with ADGRB1. The disordered stretch occupies residues 818–847 (KQPEDESPQAFSQSGSPRLNRTELPTRSAP). Over residues 826 to 847 (QAFSQSGSPRLNRTELPTRSAP) the composition is skewed to polar residues. Residues serine 833 and serine 916 each carry the phosphoserine modification. A PDZ 5 domain is found at 852-939 (DVILQRKENE…TVTLTVVAEE (88 aa)). An interaction with LPAR2 and GRIN2B region spans residues 852–939 (DVILQRKENE…TVTLTVVAEE (88 aa)). Residues 939–976 (EEHHGPPSGTNSARQSPALQHRPMGQAQATHIPGDRTA) form a disordered region. The segment covering 946-956 (SGTNSARQSPA) has biased composition (polar residues). The 83-residue stretch at 1022 to 1104 (PVELERGPRG…KVLLLLRPGT (83 aa)) folds into the PDZ 6 domain. Disordered stretches follow at residues 1124–1146 (IYDE…ESHV) and 1167–1470 (DTVQ…DKQL). Positions 1175–1191 (TLNGSQPEMKYQSIQKN) are enriched in polar residues. 2 stretches are compositionally biased toward basic and acidic residues: residues 1193–1209 (SKKD…KNLL) and 1230–1263 (RHSE…KGEN). Polar residues predominate over residues 1285–1304 (SSSPRKQQKIGGNSLSNTEG). At serine 1321 the chain carries Phosphoserine. 4 stretches are compositionally biased toward basic and acidic residues: residues 1326–1340 (PEGK…KDLK), 1350–1361 (RSPEKRSSKVDE), 1377–1397 (VSEK…DKTG), and 1422–1431 (EVTDRGKERA).

This sequence belongs to the MAGUK family. Interacts with ADRB1, ADGRB1, LPAR2/EDG4, FZD4, FZD7, GRIN2B, TGFA and VANGL2. Interacts with PTEN. Interacts with ADRB1, PTPRB and unidentified tyrosine phosphorylated proteins. Interacts with DLL1. Interacts with PRRG4 (via cytoplasmic domain).

The protein resides in the cell membrane. It is found in the cell junction. Its subcellular location is the tight junction. It localises to the nucleus. Its function is as follows. Acts as a scaffolding protein at cell-cell junctions, thereby regulating various cellular and signaling processes. Cooperates with PTEN to modulate the kinase activity of AKT1. Its interaction with PTPRB and tyrosine phosphorylated proteins suggests that it may link receptor tyrosine phosphatase with its substrates at the plasma membrane. In polarized epithelial cells, involved in efficient trafficking of TGFA to the cell surface. Regulates the ability of LPAR2 to activate ERK and RhoA pathways. Regulates the JNK signaling cascade via its interaction with FZD4 and VANGL2. In Rattus norvegicus (Rat), this protein is Membrane-associated guanylate kinase, WW and PDZ domain-containing protein 3 (Magi3).